Consider the following 231-residue polypeptide: Elongation factor 1-delta 1 (231 aa).

The residue at position 2 (alanine 2) is an N-acetylalanine. A GST C-terminal domain is found at 10-73 (DAGLKKLDEH…LRISGVSAEG (64 aa)). Disordered stretches follow at residues 85–108 (TEEA…EDDD) and 116–135 (ETEE…KAST). Residues 119–129 (EEKKAAEERAA) show a composition bias toward basic and acidic residues.

This sequence belongs to the EF-1-beta/EF-1-delta family. As to quaternary structure, EF-1 is composed of 4 subunits: alpha, beta (1B-alpha=beta'), delta (1B-beta), and gamma (1B-gamma).

Its function is as follows. EF-1-beta and EF-1-delta stimulate the exchange of GDP bound to EF-1-alpha to GTP. The polypeptide is Elongation factor 1-delta 1 (Arabidopsis thaliana (Mouse-ear cress)).